A 328-amino-acid polypeptide reads, in one-letter code: Biotin synthase (328 aa).

Residues 53-282 form the Radical SAM core domain; it reads FHGNRVDLCA…ATTIRYAGGR (230 aa). Residues C71, C75, and C78 each contribute to the [4Fe-4S] cluster site. [2Fe-2S] cluster is bound by residues S115, C147, C207, and R277.

This sequence belongs to the radical SAM superfamily. Biotin synthase family. As to quaternary structure, homodimer. Requires [4Fe-4S] cluster as cofactor. The cofactor is [2Fe-2S] cluster.

The catalysed reaction is (4R,5S)-dethiobiotin + (sulfur carrier)-SH + 2 reduced [2Fe-2S]-[ferredoxin] + 2 S-adenosyl-L-methionine = (sulfur carrier)-H + biotin + 2 5'-deoxyadenosine + 2 L-methionine + 2 oxidized [2Fe-2S]-[ferredoxin]. Its pathway is cofactor biosynthesis; biotin biosynthesis; biotin from 7,8-diaminononanoate: step 2/2. Functionally, catalyzes the conversion of dethiobiotin (DTB) to biotin by the insertion of a sulfur atom into dethiobiotin via a radical-based mechanism. The chain is Biotin synthase from Desulforudis audaxviator (strain MP104C).